Consider the following 336-residue polypeptide: Dihydroorotate dehydrogenase (quinone) (336 aa).

FMN contacts are provided by residues 62 to 66 and Thr-86; that span reads AGLDK. Lys-66 is a substrate binding site. Residue 111–115 participates in substrate binding; that stretch reads NRMGF. FMN-binding residues include Asn-139 and Asn-172. Asn-172 contributes to the substrate binding site. Catalysis depends on Ser-175, which acts as the Nucleophile. Asn-177 serves as a coordination point for substrate. Positions 217 and 245 each coordinate FMN. 246-247 is a substrate binding site; that stretch reads NT. Residues Gly-268, Gly-297, and 318–319 each bind FMN; that span reads YS.

This sequence belongs to the dihydroorotate dehydrogenase family. Type 2 subfamily. Monomer. It depends on FMN as a cofactor.

The protein localises to the cell membrane. The enzyme catalyses (S)-dihydroorotate + a quinone = orotate + a quinol. The protein operates within pyrimidine metabolism; UMP biosynthesis via de novo pathway; orotate from (S)-dihydroorotate (quinone route): step 1/1. Catalyzes the conversion of dihydroorotate to orotate with quinone as electron acceptor. The polypeptide is Dihydroorotate dehydrogenase (quinone) (Escherichia coli O17:K52:H18 (strain UMN026 / ExPEC)).